A 113-amino-acid polypeptide reads, in one-letter code: Small ribosomal subunit protein uS17 (113 aa).

It belongs to the universal ribosomal protein uS17 family. As to quaternary structure, part of the 30S ribosomal subunit.

Its function is as follows. One of the primary rRNA binding proteins, it binds specifically to the 5'-end of 16S ribosomal RNA. The chain is Small ribosomal subunit protein uS17 from Sulfurisphaera tokodaii (strain DSM 16993 / JCM 10545 / NBRC 100140 / 7) (Sulfolobus tokodaii).